Consider the following 317-residue polypeptide: Peptidyl-prolyl cis-trans isomerase CYP26-2, chloroplastic (317 aa).

Residues 1-37 (MMQPNAKLLSPSAKFLPSPIEPPQHNRRTTVGAPPSL) are disordered. Positions 95–311 (FIDVSIDGEP…SKVVVTNCGL (217 aa)) constitute a PPIase cyclophilin-type domain.

Belongs to the cyclophilin-type PPIase family. As to expression, ubiquitous. Lower levels of expression in roots.

The protein localises to the plastid. The protein resides in the chloroplast thylakoid. It carries out the reaction [protein]-peptidylproline (omega=180) = [protein]-peptidylproline (omega=0). Functionally, PPIases accelerate the folding of proteins. It catalyzes the cis-trans isomerization of proline imidic peptide bonds in oligopeptides. The protein is Peptidyl-prolyl cis-trans isomerase CYP26-2, chloroplastic (CYP26-2) of Arabidopsis thaliana (Mouse-ear cress).